The following is a 203-amino-acid chain: Holliday junction branch migration complex subunit RuvA (203 aa).

The interval 1 to 64 (MIGRLRGTLA…EDAQLLYGFI (64 aa)) is domain I. The segment at 65 to 143 (GKRDRDFFRE…AWEVVPSMFA (79 aa)) is domain II. The flexible linker stretch occupies residues 144–154 (LVPNQPDMPAG). The domain III stretch occupies residues 155 to 203 (QVASAESDAVSALISLGYKPQEASKAVSAIKDKNLSSEDMIRRALKGMI).

It belongs to the RuvA family. In terms of assembly, homotetramer. Forms an RuvA(8)-RuvB(12)-Holliday junction (HJ) complex. HJ DNA is sandwiched between 2 RuvA tetramers; dsDNA enters through RuvA and exits via RuvB. An RuvB hexamer assembles on each DNA strand where it exits the tetramer. Each RuvB hexamer is contacted by two RuvA subunits (via domain III) on 2 adjacent RuvB subunits; this complex drives branch migration. In the full resolvosome a probable DNA-RuvA(4)-RuvB(12)-RuvC(2) complex forms which resolves the HJ.

The protein localises to the cytoplasm. The RuvA-RuvB-RuvC complex processes Holliday junction (HJ) DNA during genetic recombination and DNA repair, while the RuvA-RuvB complex plays an important role in the rescue of blocked DNA replication forks via replication fork reversal (RFR). RuvA specifically binds to HJ cruciform DNA, conferring on it an open structure. The RuvB hexamer acts as an ATP-dependent pump, pulling dsDNA into and through the RuvAB complex. HJ branch migration allows RuvC to scan DNA until it finds its consensus sequence, where it cleaves and resolves the cruciform DNA. This Pseudomonas fluorescens (strain SBW25) protein is Holliday junction branch migration complex subunit RuvA.